Reading from the N-terminus, the 263-residue chain is GTP cyclohydrolase FolE2 (263 aa).

It belongs to the GTP cyclohydrolase IV family.

It catalyses the reaction GTP + H2O = 7,8-dihydroneopterin 3'-triphosphate + formate + H(+). It participates in cofactor biosynthesis; 7,8-dihydroneopterin triphosphate biosynthesis; 7,8-dihydroneopterin triphosphate from GTP: step 1/1. In terms of biological role, converts GTP to 7,8-dihydroneopterin triphosphate. This chain is GTP cyclohydrolase FolE2, found in Nitrosospira multiformis (strain ATCC 25196 / NCIMB 11849 / C 71).